Here is a 481-residue protein sequence, read N- to C-terminus: MAKEVDYTIKPEATASNINTEDWPLLLKNYDKLMVRTGHFTPIPAGSSPLKRDLKSYINSGVINLDKPSNPSSHEVVAWMKRILRAEKTGHSGTLDPKVTGCLIVCIDRATRLVKSQQGAGKEYVCVIRLHDKIPGGEAQFKRALETLTGALFQRPPLISAVKRQLRIRTIHESKLYEFDNERHLGVFWVSCEAGTYIRTLCVHLGLLLGVGAHMQELRRVRSGAMSENEGMVTLHDVLDAQWLYDNQRDESYLRKVIKPLESLLTTYKRIVVKDSAVNAVCYGAKLMIPGLLRFEAGIELGEEVVLMTTKGEAIAIGIAQMSTVELSTCDHGVVAKVKRCIMERDLYPRRWGLGPVALEKKKLKSSGKLDKYGRANEATPAKWKSEYKDYSAPDGDSSQQAVDVVAKEEASPKEEPSLEANESKMDIDDAQDDEDKKKRKRHEGETPEERAERKRKKKEKKEKKERRKSKQEKDDSDDSD.

The active-site Nucleophile is the Asp96. Residues 268 to 343 enclose the PUA domain; sequence YKRIVVKDSA…VVAKVKRCIM (76 aa). The tract at residues 387 to 481 is disordered; sequence EYKDYSAPDG…QEKDDSDDSD (95 aa). Composition is skewed to basic and acidic residues over residues 406–428 and 443–453; these read VAKEEASPKEEPSLEANESKMDI and HEGETPEERAE. The span at 454-471 shows a compositional bias: basic residues; it reads RKRKKKEKKEKKERRKSK.

This sequence belongs to the pseudouridine synthase TruB family. Component of the small nucleolar ribonucleoprotein particles containing H/ACA-type snoRNAs (H/ACA snoRNPs).

It localises to the nucleus. The protein resides in the nucleolus. The catalysed reaction is uridine in 5S rRNA = pseudouridine in 5S rRNA. It carries out the reaction uridine in snRNA = pseudouridine in snRNA. The enzyme catalyses a uridine in mRNA = a pseudouridine in mRNA. Functionally, catalytic subunit of H/ACA small nucleolar ribonucleoprotein (H/ACA snoRNP) complex, which catalyzes pseudouridylation of rRNA. This involves the isomerization of uridine such that the ribose is subsequently attached to C5, instead of the normal N1. Pseudouridine ('psi') residues may serve to stabilize the conformation of rRNAs and play a central role in ribosomal RNA processing. The H/ACA snoRNP complex also mediates pseudouridylation of other types of RNAs. Catalyzes pseudouridylation at position 93 in U2 snRNA. Also catalyzes pseudouridylation of mRNAs; H/ACA-type snoRNAs probably guide pseudouridylation of mRNAs. In Emericella nidulans (strain FGSC A4 / ATCC 38163 / CBS 112.46 / NRRL 194 / M139) (Aspergillus nidulans), this protein is H/ACA ribonucleoprotein complex subunit CBF5 (cbf5).